A 271-amino-acid polypeptide reads, in one-letter code: Methylthioribulose-1-phosphate dehydratase (271 aa).

Cysteine 123 is a binding site for substrate. The Zn(2+) site is built by histidine 141 and histidine 143. Catalysis depends on glutamate 166, which acts as the Proton donor/acceptor. Residue histidine 231 participates in Zn(2+) binding.

Belongs to the aldolase class II family. MtnB subfamily. Zn(2+) serves as cofactor.

Its subcellular location is the cytoplasm. It catalyses the reaction 5-(methylsulfanyl)-D-ribulose 1-phosphate = 5-methylsulfanyl-2,3-dioxopentyl phosphate + H2O. The protein operates within amino-acid biosynthesis; L-methionine biosynthesis via salvage pathway; L-methionine from S-methyl-5-thio-alpha-D-ribose 1-phosphate: step 2/6. Its function is as follows. Catalyzes the dehydration of methylthioribulose-1-phosphate (MTRu-1-P) into 2,3-diketo-5-methylthiopentyl-1-phosphate (DK-MTP-1-P). This Candida dubliniensis (strain CD36 / ATCC MYA-646 / CBS 7987 / NCPF 3949 / NRRL Y-17841) (Yeast) protein is Methylthioribulose-1-phosphate dehydratase.